The chain runs to 506 residues: Proline--tRNA ligase (506 aa).

It belongs to the class-II aminoacyl-tRNA synthetase family. ProS type 3 subfamily. Homodimer.

It is found in the cytoplasm. The catalysed reaction is tRNA(Pro) + L-proline + ATP = L-prolyl-tRNA(Pro) + AMP + diphosphate. Its function is as follows. Catalyzes the attachment of proline to tRNA(Pro) in a two-step reaction: proline is first activated by ATP to form Pro-AMP and then transferred to the acceptor end of tRNA(Pro). This is Proline--tRNA ligase from Akkermansia muciniphila (strain ATCC BAA-835 / DSM 22959 / JCM 33894 / BCRC 81048 / CCUG 64013 / CIP 107961 / Muc).